Reading from the N-terminus, the 309-residue chain is Homoserine kinase (309 aa).

91 to 101 (PIGSGLGSSAC) contributes to the ATP binding site.

The protein belongs to the GHMP kinase family. Homoserine kinase subfamily.

The protein resides in the cytoplasm. It catalyses the reaction L-homoserine + ATP = O-phospho-L-homoserine + ADP + H(+). It participates in amino-acid biosynthesis; L-threonine biosynthesis; L-threonine from L-aspartate: step 4/5. In terms of biological role, catalyzes the ATP-dependent phosphorylation of L-homoserine to L-homoserine phosphate. The sequence is that of Homoserine kinase from Cronobacter sakazakii (strain ATCC BAA-894) (Enterobacter sakazakii).